The primary structure comprises 345 residues: L-threonine 3-dehydrogenase (345 aa).

Zn(2+) is bound at residue Cys-42. Residues Thr-44 and His-47 each act as charge relay system in the active site. 6 residues coordinate Zn(2+): His-67, Glu-68, Cys-97, Cys-100, Cys-103, and Cys-111. Residues Ile-179, Asp-199, Arg-204, 266 to 268 (LGI), and 290 to 291 (IY) each bind NAD(+).

This sequence belongs to the zinc-containing alcohol dehydrogenase family. In terms of assembly, homotetramer. Requires Zn(2+) as cofactor.

The protein resides in the cytoplasm. It carries out the reaction L-threonine + NAD(+) = (2S)-2-amino-3-oxobutanoate + NADH + H(+). Its pathway is amino-acid degradation; L-threonine degradation via oxydo-reductase pathway; glycine from L-threonine: step 1/2. Catalyzes the NAD(+)-dependent oxidation of L-threonine to 2-amino-3-ketobutyrate. The chain is L-threonine 3-dehydrogenase from Sinorhizobium fredii (strain NBRC 101917 / NGR234).